A 166-amino-acid chain; its full sequence is Large ribosomal subunit protein uL11 (166 aa).

The protein belongs to the universal ribosomal protein uL11 family.

This protein binds directly to 26S ribosomal RNA. This is Large ribosomal subunit protein uL11 (RPL12) from Prunus armeniaca (Apricot).